Consider the following 180-residue polypeptide: Large ribosomal subunit protein uL5 (180 aa).

The protein belongs to the universal ribosomal protein uL5 family. Part of the 50S ribosomal subunit; part of the 5S rRNA/L5/L18/L25 subcomplex. Contacts the 5S rRNA and the P site tRNA. Forms a bridge to the 30S subunit in the 70S ribosome.

Its function is as follows. This is one of the proteins that bind and probably mediate the attachment of the 5S RNA into the large ribosomal subunit, where it forms part of the central protuberance. In the 70S ribosome it contacts protein S13 of the 30S subunit (bridge B1b), connecting the 2 subunits; this bridge is implicated in subunit movement. Contacts the P site tRNA; the 5S rRNA and some of its associated proteins might help stabilize positioning of ribosome-bound tRNAs. This chain is Large ribosomal subunit protein uL5, found in Streptococcus thermophilus (strain CNRZ 1066).